A 207-amino-acid chain; its full sequence is Phenazine biosynthesis protein PhzD (207 aa).

Asp38 serves as the catalytic Proton donor. Residues Gln78, Arg87, Lys122, and 151-155 (YAHVG) contribute to the substrate site.

This sequence belongs to the isochorismatase family. As to quaternary structure, homodimer.

The enzyme catalyses (2S)-2-amino-4-deoxychorismate + H2O = (5S,6S)-6-amino-5-hydroxycyclohexa-1,3-diene-1-carboxyate + pyruvate. Its pathway is antibiotic biosynthesis; phenazine biosynthesis. Involved in the biosynthesis of the antibiotic phenazine, a nitrogen-containing heterocyclic molecule having important roles in virulence, competition and biological control. Catalyzes the hydrolysis of the vinyl ether functional group of 2-amino-2-deoxyisochorismate (ADIC), yielding pyruvate and trans-2,3-dihydro-3-hydroxyanthranilic acid (DHHA). The protein is Phenazine biosynthesis protein PhzD of Pseudomonas fluorescens.